The sequence spans 448 residues: MTESVIYSGTSELISADEDNTETTRAHLLSFEQLQAQLKAQQELFQQQRELFNNDNVHTSSIPTLNHTWSFTQGLVVGQLSVIVVVAIFIKFFVFADSSATTTTTSSSNKDISGVIVKRNKNVRGTSNEDKDPNNNKEDDLNSPNLSKISTILEKTYYDVENHSPESLDWFNVLIAQTISQLRTEALLSDNIYHSLNEFLTNSDLPDYMDKIKLTEIDIGDDFPIFSNCRIKHSKDRSGRLEAKIDVDLSDTLTLGIETRLLLNHPRPLTAVLPVQLSVSIVRFSGCLTVALINTNDEEFLDLQNVTTPSPGPSNEPNSQNQTQQPTPVNNSSSRASHDVPSSSETKHSKAKRSQEDTGTALMFSFSPDYRLEFTVKSLIGSRAKLQDVPKISSLIESKLRSWFIERCIEPRFQVVKVPSLWPRRQNTREPVHSNANGIVDKTEEASI.

The Lumenal portion of the chain corresponds to 1–74 (MTESVIYSGT…LNHTWSFTQG (74 aa)). Residues 75 to 95 (LVVGQLSVIVVVAIFIKFFVF) traverse the membrane as a helical segment. The Cytoplasmic segment spans residues 96 to 448 (ADSSATTTTT…IVDKTEEASI (353 aa)). Disordered regions lie at residues 119–144 (RNKNVRGTSNEDKDPNNNKEDDLNSP) and 303–357 (LQNV…SQED). Positions 127–140 (SNEDKDPNNNKEDD) are enriched in basic and acidic residues. Residues 164–419 (SPESLDWFNV…EPRFQVVKVP (256 aa)) form the SMP-LTD domain. The span at 313–332 (PSNEPNSQNQTQQPTPVNNS) shows a compositional bias: low complexity. Residues 345-356 (ETKHSKAKRSQE) show a composition bias toward basic and acidic residues.

This sequence belongs to the MMM1 family. In terms of assembly, homodimer. Component of the ER-mitochondria encounter structure (ERMES) or MDM complex, composed of MMM1, MDM10, MDM12 and MDM34. An MMM1 homodimer associates with one molecule of MDM12 on each side in a pairwise head-to-tail manner, and the SMP-LTD domains of MMM1 and MDM12 generate a continuous hydrophobic tunnel for phospholipid trafficking.

Its subcellular location is the endoplasmic reticulum membrane. Its function is as follows. Component of the ERMES/MDM complex, which serves as a molecular tether to connect the endoplasmic reticulum (ER) and mitochondria. Components of this complex are involved in the control of mitochondrial shape and protein biogenesis, and function in nonvesicular lipid trafficking between the ER and mitochondria. The MDM12-MMM1 subcomplex functions in the major beta-barrel assembly pathway that is responsible for biogenesis of all outer membrane beta-barrel proteins, and acts in a late step after the SAM complex. The MDM10-MDM12-MMM1 subcomplex further acts in the TOM40-specific pathway after the action of the MDM12-MMM1 complex. Essential for establishing and maintaining the structure of mitochondria and maintenance of mtDNA nucleoids. The chain is Maintenance of mitochondrial morphology protein 1 from Debaryomyces hansenii (strain ATCC 36239 / CBS 767 / BCRC 21394 / JCM 1990 / NBRC 0083 / IGC 2968) (Yeast).